The primary structure comprises 1140 residues: Protein FAM184A (1140 aa).

Coiled coils occupy residues 57–256 (ALNT…NKAQ), 296–800 (AILR…IEME), and 868–907 (RITDLQEELRHREHHISELDKEVQHLHENISALTKELEFK). A disordered region spans residues 1063–1128 (PNLSALESGG…EASPVASPDP (66 aa)).

It belongs to the FAM184 family.

It is found in the cytoplasm. The protein localises to the P-body. Its subcellular location is the cytoskeleton. The protein resides in the microtubule organizing center. It localises to the centrosome. It is found in the centriolar satellite. The polypeptide is Protein FAM184A (Homo sapiens (Human)).